We begin with the raw amino-acid sequence, 652 residues long: MINRLIQRIVPFSRPLSTVKKTMLTPFLESKRPQQSPEYDYSTLSNYKSFQIKHTTLNFLLSFEKSTVSGDVVFDLTTLKEAVKHIDLDTSYLDVNEVLVDDKPVEFKIEERKQPLGSKLVIAAELEAERQFKLRVKFSTTKDCTALQWLTPQQTSGDKPYMFSQLEAIHARALFPCFDTPSYKSTFTANIESTLPVVFSGIATGSTPNGESTVYHFKQDIPIPAYLVGIASGDLVSASIGPRSKVYTEPHRLDDCVWEFSNDVEKFIKTAENLIFDYEWGTYDILVNVDSYPYGGMESPNMTFATPTLIAHDKTNIDVIAHELAHSWSGNLVTNCSWNHFWLNEGWTVYIERRIVGALHGEPTRHFSALIGWSDLENSINSMRNPEKFSTLVQNLNDGTDPDDAFSTVPYEKGFNLLFHLETVLGGPQEFDPFIRHYFKKFARQSLDTFQFLDTLFEFFENKREILENVDWETWLFKPGMPPKPQFITTMADNVFSLVNKWIVKAQELKTTEEFSKEFSESDLSEFNSNQVVLFLEELVAQNCVPVESKIEWSKYSVASESLLSIYKKQVTESQNAEVVFKNYKFQTTARIQPSYQQLANWLGTVGRMKFVRPGYRLLNAVDRDLAIATFEKLKDTYHPICKQLVKQDLEL.

A peptide is bound by residues 165-167 and 293-298; these read QLE and PYGGME. H322 contacts Zn(2+). E323 acts as the Proton acceptor in catalysis. Positions 326 and 345 each coordinate Zn(2+). Y411 (proton donor) is an active-site residue.

It belongs to the peptidase M1 family. The cofactor is Zn(2+).

The protein resides in the cytoplasm. It is found in the nucleus. It catalyses the reaction an epoxide + H2O = an ethanediol. Aminopeptidase that preferentially cleaves di- and tripeptides. Also has low epoxide hydrolase activity (in vitro). Can hydrolyze the epoxide leukotriene LTA(4) but it forms preferentially 5,6-dihydroxy-7,9,11,14-eicosatetraenoic acid rather than the cytokine leukotriene B(4) as the product compared to the homologous mammalian enzyme (in vitro). In Candida glabrata (strain ATCC 2001 / BCRC 20586 / JCM 3761 / NBRC 0622 / NRRL Y-65 / CBS 138) (Yeast), this protein is Leucine aminopeptidase 2.